The sequence spans 641 residues: MNIINLGILAHIDAGKTSVTENLLFASGATEKCGCVDNGDTITDSMDIEKRRGITVRASTTSIIWNGVKCNIIDTPGHMDFIAEVERTFKMLDGAVLILSAKEGIQAQTKLLFNTLQKLQIPTIIFINKIDRAGVNLERLYLDIKANLSQDVLFMQNVVDGSVYPVCSQTYIKEEYKEFVCNHDDNILERYLADSEISPADYWNTIIALVAKAKVYPVLHGSAMFNIGINELLDAITSFILPPASVSNRLSSYLYKIEHDPKGHKRSFLKIIDGSLRLRDVVRINDSEKFIKIKNLKTINQGREINVDEVGANDIAIVEDMDDFRIGNYLGAEPCLIQGLSHQHPALKSSVRPDRPEERSKVISALNTLWIEDPSLSFSINSYSDELEISLYGLTQKEIIQTLLEERFSVKVHFDEIKTIYKERPVKKVNKIIQIEVPPNPYWATIGLTLEPLPLGTGLQIESDISYGYLNHSFQNAVFEGIRMSCQSGLHGWEVTDLKVTFTQAEYYSPVSTPADFRQLTPYVFRLALQQSGVDILEPMLYFELQIPQAASSKAITDLQKMMSEIEDISCNNEWCHIKGKVPLNTSKDYASEVSSYTKGLGIFMVKPCGYQITKGGYSDNIRMNEKDKLLFMFQKSMSSK.

Residues 1 to 244 (MNIINLGILA…AITSFILPPA (244 aa)) enclose the tr-type G domain. GTP is bound by residues 10–17 (AHIDAGKT), 74–78 (DTPGH), and 128–131 (NKID).

It belongs to the TRAFAC class translation factor GTPase superfamily. Classic translation factor GTPase family. TetM/TetO subfamily.

In terms of biological role, abolishes the inhibitory effect of tetracyclin on protein synthesis by a non-covalent modification of the ribosomes. The sequence is that of Tetracycline resistance protein TetQ (tetQ) from Bacteroides thetaiotaomicron.